The following is a 207-amino-acid chain: Cytochrome c oxidase subunit 3 (207 aa).

The next 5 helical transmembrane spans lie at 28–48 (FLGF…LFAT), 70–90 (VVFM…YAIY), 102–122 (LWFG…IYEF), 144–164 (LVGT…TLMI), and 186–206 (WHFI…MGMV).

It belongs to the cytochrome c oxidase subunit 3 family.

It localises to the cell membrane. It carries out the reaction 4 Fe(II)-[cytochrome c] + O2 + 8 H(+)(in) = 4 Fe(III)-[cytochrome c] + 2 H2O + 4 H(+)(out). In Bacillus sp. (strain PS3), this protein is Cytochrome c oxidase subunit 3 (ctaE).